Consider the following 324-residue polypeptide: Holliday junction branch migration complex subunit RuvB (324 aa).

The interval 1 to 168 (MEDLALRPKT…FGIVEHLEYY (168 aa)) is large ATPase domain (RuvB-L). Residues Tyr14, Ile15, Gly48, Lys51, Thr52, Thr53, Asp97, Thr146, Tyr168, and Arg205 each contribute to the ATP site. A Mg(2+)-binding site is contributed by Thr52. A small ATPAse domain (RuvB-S) region spans residues 169-239 (TPEELAQGVM…RALEALAALG (71 aa)). Residues 242-324 (ELGLEKRDRE…PPPVGPLLEP (83 aa)) form a head domain (RuvB-H) region. Residues Arg297 and Arg302 each contribute to the DNA site.

This sequence belongs to the RuvB family. Homohexamer. Forms a complex with RuvA. Electron microscopic images suggest 2 closely interacting RuvA tetramers sandwich the HJ DNA; each tetramer associates with an RuvB hexamer. Forms 2 complexes with Holliday junction (HJ) DNA which probably have 1 and 2 RuvA tetramers per complex (called complex I and complex II). Forms an RuvA(8)-RuvB(12)-Holliday junction (HJ) complex. HJ DNA is sandwiched between 2 RuvA tetramers; dsDNA enters through RuvA and exits via RuvB. An RuvB hexamer assembles on each DNA strand where it exits the tetramer. Each RuvB hexamer is contacted by two RuvA subunits (via domain III) on 2 adjacent RuvB subunits; this complex drives branch migration. In the full resolvosome a probable DNA-RuvA(4)-RuvB(12)-RuvC(2) complex forms which resolves the HJ. It depends on Mg(2+) as a cofactor.

It localises to the cytoplasm. The catalysed reaction is ATP + H2O = ADP + phosphate + H(+). The activity of RuvB is enhanced by E.coli RuvA. The RuvA-RuvB-RuvC complex processes Holliday junction (HJ) DNA during genetic recombination and DNA repair, while the RuvA-RuvB complex plays an important role in the rescue of blocked DNA replication forks via replication fork reversal (RFR). RuvA specifically binds to HJ cruciform DNA, conferring on it an open structure. The RuvB hexamer acts as an ATP-dependent pump, pulling dsDNA into and through the RuvAB complex. RuvB forms 2 homohexamers on either side of HJ DNA bound by 1 or 2 RuvA tetramers; 4 subunits per hexamer contact DNA at a time. Coordinated motions by a converter formed by DNA-disengaged RuvB subunits stimulates ATP hydrolysis and nucleotide exchange. Immobilization of the converter enables RuvB to convert the ATP-contained energy into a lever motion, pulling 2 nucleotides of DNA out of the RuvA tetramer per ATP hydrolyzed, thus driving DNA branch migration. The RuvB motors rotate together with the DNA substrate, which together with the progressing nucleotide cycle form the mechanistic basis for DNA recombination by continuous HJ branch migration. Branch migration allows RuvC to scan DNA until it finds its consensus sequence, where it cleaves and resolves cruciform DNA. In terms of biological role, ruvB is a Mg(2+)-dependent, DNA-dependent ATPase with an equal preference for supercoiled and linear dsDNA; all (d)NTPs tested were efficiently hydrolyzed. Promotes Holliday junction (HJ) dissociation at 60 degrees Celsius in the presence of ATP but not ATP-gamma-S or ADP; (d)ATP, (d)CTP and dTTP also power dissociation in the absence of any RuvA. RuvA stimulates the ATPase of RuvB in the presence of dsDNA and HJ branch migration by RuvB. Excess RuvB stimulates some branch migration in vitro even in the presence of mutant RuvA. This chain is Holliday junction branch migration complex subunit RuvB, found in Thermus thermophilus (strain ATCC 27634 / DSM 579 / HB8).